A 100-amino-acid polypeptide reads, in one-letter code: uncharacterized protein (100 aa).

The protein localises to the mitochondrion. This is an uncharacterized protein from Arabidopsis thaliana (Mouse-ear cress).